We begin with the raw amino-acid sequence, 1163 residues long: Hamartin (1163 aa).

A Glycyl lysine isopeptide (Lys-Gly) (interchain with G-Cter in ubiquitin) cross-link involves residue lysine 30. Over residues 295–316 (SSYVDTQNSYGGATSTPSSTSR) the composition is skewed to polar residues. Disordered stretches follow at residues 295–337 (SSYV…STRP) and 353–594 (CGMT…QRGV). Residues 321–337 (STPGQLPQSLSSLSTRP) are compositionally biased toward low complexity. Pro residues predominate over residues 393-402 (TSPPPAPPCP). The segment at 403–787 (QDDCAHGPAS…QIRQLQHDRE (385 aa)) is mediates interaction with WDR45B. Over residues 474–487 (EKDKEEAAISKELS) the composition is skewed to basic and acidic residues. Phosphoserine occurs at positions 487, 505, 511, 521, 595, and 598. Polar residues predominate over residues 512 to 530 (LSGSQRKTHSAASGTQGFS). Coiled-coil stretches lie at residues 721 to 919 (RKVI…LAKK) and 970 to 994 (EKDG…ERLD). Residues 1008-1020 (NEEAAGHNGETRT) show a composition bias toward basic and acidic residues. Residues 1008 to 1163 (NEEAAGHNGE…DYNETHHEHS (156 aa)) form a disordered region. Over residues 1029–1046 (SCGGRVTGGSSSSSSELS) the composition is skewed to low complexity. Polar residues predominate over residues 1066 to 1083 (EPSSSIPTTVGSLPSSKS). A compositionally biased stretch (basic and acidic residues) spans 1088–1099 (KTRELFRNKSES). A Phosphoserine modification is found at serine 1097. A compositionally biased stretch (low complexity) spans 1131–1146 (PPSLDAPHPSSPSSDS). Basic and acidic residues predominate over residues 1154 to 1163 (DYNETHHEHS).

As to quaternary structure, component of the TSC-TBC complex (also named Rhebulator complex), composed of 2 molecules of TSC1, 2 molecules of TSC2 and 1 molecule of TBC1D7. Probably forms a complex composed of chaperones HSP90 and HSP70, co-chaperones STIP1/HOP, CDC37, PPP5C, PTGES3/p23, TSC1 and client protein TSC2. Forms a complex composed of chaperones HSP90 and HSP70, co-chaperones CDC37, PPP5C, TSC1 and client protein TSC2, CDK4, AKT, RAF1 and NR3C1; this complex does not contain co-chaperones STIP1/HOP and PTGES3/p23. Forms a complex containing HSP90AA1, TSC1 and TSC2; TSC1 is required to recruit TCS2 to the complex. Interacts (via C-terminus) with the closed form of HSP90AA1 (via the middle domain and TPR repeat-binding motif). Interacts with DOCK7. Interacts with FBXW5. Interacts with WDR45B. Interacts with RPAP3 and URI1. In terms of processing, phosphorylation at Ser-505 does not affect interaction with TSC2. Post-translationally, 'Lys-63'-linked ubiquitinated at Lys-30 by PELI1; the ubiquitination promotes TSC1/TSC2 complex stability. As to expression, highly expressed in brain, spleen and kidney, followed by liver and heart.

It is found in the lysosome membrane. The protein localises to the cytoplasm. The protein resides in the cytosol. Non-catalytic component of the TSC-TBC complex, a multiprotein complex that acts as a negative regulator of the canonical mTORC1 complex, an evolutionarily conserved central nutrient sensor that stimulates anabolic reactions and macromolecule biosynthesis to promote cellular biomass generation and growth. The TSC-TBC complex acts as a GTPase-activating protein (GAP) for the small GTPase RHEB, a direct activator of the protein kinase activity of mTORC1. In absence of nutrients, the TSC-TBC complex inhibits mTORC1, thereby preventing phosphorylation of ribosomal protein S6 kinase (RPS6KB1 and RPS6KB2) and EIF4EBP1 (4E-BP1) by the mTORC1 signaling. The TSC-TBC complex is inactivated in response to nutrients, relieving inhibition of mTORC1. Within the TSC-TBC complex, TSC1 stabilizes TSC2 and prevents TSC2 self-aggregation. Involved in microtubule-mediated protein transport via its ability to regulate mTORC1 signaling. Also acts as a co-chaperone for HSP90AA1 facilitating HSP90AA1 chaperoning of protein clients such as kinases, TSC2 and glucocorticoid receptor NR3C1. Increases ATP binding to HSP90AA1 and inhibits HSP90AA1 ATPase activity. Competes with the activating co-chaperone AHSA1 for binding to HSP90AA1, thereby providing a reciprocal regulatory mechanism for chaperoning of client proteins. Recruits TSC2 to HSP90AA1 and stabilizes TSC2 by preventing the interaction between TSC2 and ubiquitin ligase HERC1. This chain is Hamartin, found in Rattus norvegicus (Rat).